The chain runs to 89 residues: Small ribosomal subunit protein uS17 (89 aa).

Belongs to the universal ribosomal protein uS17 family. In terms of assembly, part of the 30S ribosomal subunit.

Its function is as follows. One of the primary rRNA binding proteins, it binds specifically to the 5'-end of 16S ribosomal RNA. In Azoarcus sp. (strain BH72), this protein is Small ribosomal subunit protein uS17.